The following is a 344-amino-acid chain: Glycerol-3-phosphate dehydrogenase [NAD(P)+] 2 (344 aa).

Residues S12, W13, R33, R34, and K107 each contribute to the NADPH site. Residues K107, G138, and S140 each coordinate sn-glycerol 3-phosphate. A142 is an NADPH binding site. The sn-glycerol 3-phosphate site is built by K193, D246, S256, R257, and N258. The active-site Proton acceptor is K193. R257 contributes to the NADPH binding site. Residues V281 and E283 each coordinate NADPH.

This sequence belongs to the NAD-dependent glycerol-3-phosphate dehydrogenase family.

Its subcellular location is the cytoplasm. It carries out the reaction sn-glycerol 3-phosphate + NAD(+) = dihydroxyacetone phosphate + NADH + H(+). The enzyme catalyses sn-glycerol 3-phosphate + NADP(+) = dihydroxyacetone phosphate + NADPH + H(+). Its pathway is membrane lipid metabolism; glycerophospholipid metabolism. Its function is as follows. Catalyzes the reduction of the glycolytic intermediate dihydroxyacetone phosphate (DHAP) to sn-glycerol 3-phosphate (G3P), the key precursor for phospholipid synthesis. This chain is Glycerol-3-phosphate dehydrogenase [NAD(P)+] 2, found in Salinibacter ruber (strain DSM 13855 / M31).